A 2635-amino-acid polypeptide reads, in one-letter code: MAAQPLYMEGMASTHQANCIFGEHAGSQCLSNCVMYLASSYYNSETPLVDRASLDDVLEQGMRLDLLLRKSGMLGFRQYAQLHHIPGFLRTDDWATKIFQSPEFYGLIGQDAAIREPFIESLRSVLSRNYAGTVQYLIIICQSKAGAIVVKDKTYYMFDPHCIPNIPNSPAHVIKTNDVGVLLPYIATHDTEYTGCFLYFIPHDYISPEHYIANHYRTIVFEELHGPRMDISRGVESCSITEITSPSVSPAPSEAPLRRDSTQSQDETRPRRPRVVIPPYDPTDRPRPPHQDRPPEQAAGYGGNKGRGGNKGRGGKTGRGGNEGRGGHQPPDEHQPPHITAEHMDQSDGQGADGDMDSTPANGETSVTETPGPEPNPPARPDREPPPTPPATPGATALLSDLTATRGQKRKFSSLKESYPIDSPPSDDDDVSQPSQQTAPDTEDIWIDDPLTPLYPLTDTPSFDITADVTPDNTHPEKAADGDFTNKTTSTDADRYASASQESLGTLVSPYDFTNLDTLLAELGRLGTAQPIPVIVDRLTSRPFREASALQAMDRILTHVVLEYGLVSGYSTAAPSKCTHVLQFFILWGEKLGIPTEDAKTLLESALEIPAMCEIVQQGRLKEPTFSRHIISKLNPCLESLHATSRQDFKSLIQAFNAEGIRIASRERETSMAELIETITARLKPNFNIVCARQDAQTIQDGVGLLRAEVNKRNAQIAQEAAYFENIITALSTFQPPPQSQQTFEVLPDLKLRTLVEHLTLVEAQVTTQTVESLQAYLQSAATAEHHLTNVPNVHSILSNISNTLKVIDYVIPKFIINTDTLAPYKQQFSYLGGELASMFSLDWPHAPAEAVEPLPVLTSLRGKIAEALTRQENKNAVDQILTDAEGLLKNITDPNGAHFHAQAVSIPVLENYVHNAGVLLKGEKSERFSRLKTAIQNLVSSESFITVTLHSTNLGNLVTNVPKLGEAFTGGPHLLTSPSVRQSLSTLCTTLLRDALDALEKKDPALLGEGTTLALETLLGYGSVQDYKETVQIISSLVGIQKLVRDQGADKWATAVTRLTDLKSTLATTAIETATKRKLYRLIQRDLKEAQKHETNRAMEEWKQKVLALDNASPERVATLLQQAPTAKAREFAEKHFKILLPVPADAPVQASPTPMEYSASPLPDPKDIDRATSIHGEQAWKKIQQAFKDFNFAVLRPADWDALAAEYQRRGSPLPAAVGPALSGFLETILGTLNDIYMDKLRSFLPDAQPFQAPPFDWLTPYQDQVSFFLRTIGLPLVRALADKISVQALRLSHALQSGDLQQATVGTPLELPATEYARIASNMKSVFNDHGLQVRSEVADYVEAQRADAHTPHVPRPKIQAPKTLIPHPDAIVADGLPAFLKTSLLQQEAKLLALQRADFESLESDMRAAEAQRKASREETQRKMAHAITQLLQQAPSAISGRPLSLQDPVGFLEGIIYDKVLERESYETGLEGLSWLEQTIKSITVYAPVEEKQRMHVLLDEVKKQRANTETALELEAAATHGDDARLLQRAVDELSPLRVKGGKAAVESWRQKIQTLKSLVQEAEQAGLLLATIDTVAGQAQETISPSTLQGLYQQGQEAMAAIKRFRDSPQLAGLQEKLAELQQYVKYKKQYLEHFEATQSVVFTAFPLTQEVTIPALHYAGPFDNLERLSRYLHIGQTQPAPGQWLLTLPTFDPTRPACVPAGGHEPPLHRQVVFSSFLEAQIRLALSVAGPVPGRGLPGTPQIRRGVEAAACFLHQWDEISRLLPEVLDTFFHNAPLPAESSSNAFLAMCVLTHLVYLAGRAVLGPREPEHAAPDAYPREVALAPRDLTYLLLAMWPSWISAILKQPSHAEAAHACLVTLPTMLKAVPYLTLEASAGPLPADMRHFATPEARLFFPARWHHVNVQEKLWLRNDFMSLCHRSPGRARIAVLVWAVTCLDPEVIRQLWSTLRPLTADESDTASGLLRVLVEMEFGPPPKTPRREAVAPGATLPPYPYGLATGERLVGQAQERSGGAGKMPVSGFEIVLGALLFRAPLRIFSTASTHRISDFEGGFQILTPLLDCCPDREPFASLAAAPRRTVPLGDPCANIHTPEEIQIFARQAAWLQYTFANYQIPSTDNPIPIVVLNANNNLENSYIPRDRKADPLRPFYVVPLKPQGRWPEIMTTATTPCRLPTSPEEAGSQFARLLQSQVSATWSDIFSRVPERLAPNAPQKSSQTMSEIHEVAATPPLTITPNKPTGTPHVSPEADPITERKRGQQPKIVADNMPSRILPSLPTPKPREPRITLPHALPVISPPAHRPSPIPHLPAPQVTEPKGVLQSKRGTLVLRPAAVIDPRKPVSAPITRYERTALQPPRTEGEGRRPPDTQPVTLTFRLPPTAPTPATAALETKTTPPSTPPHAIDISPPQTPPMSTSPHARDTSPPAEKRAAPVIRVMAPTQPSGEARVKRVEIEQGLSTRNEAPPLERSNHAVPAVTPRRTVAREIRIPPEIKAGWDTAPDIPLPHSSPESSPPTSPQPIRVDDKSPLPNLVERYARGFLDTPSVEVMSLENQDIAVDPGLLTRRIPSVVPMPHPIMWSPIVPISLQNTDIDTAKITLISFIRRIKQKVAALSASLAETVDRIKKWYL.

The tract at residues 1–233 (MAAQPLYMEG…LHGPRMDISR (233 aa)) is deubiquitination activity. The region spanning 9-223 (EGMASTHQAN…NHYRTIVFEE (215 aa)) is the Peptidase C76 domain. Active-site residues include Cys29, Asp159, and His161. 4 disordered regions span residues 243 to 497 (ITSP…DRYA), 2238 to 2269 (PLTI…QQPK), 2357 to 2438 (RTAL…KRAA), and 2500 to 2533 (KAGW…DDKS). The segment covering 245–255 (SPSVSPAPSEA) has biased composition (low complexity). Composition is skewed to basic and acidic residues over residues 256 to 270 (PLRR…ETRP) and 282 to 295 (PTDR…DRPP). Residues 316–325 (KTGRGGNEGR) form an interaction with inner tegument protein region. Basic and acidic residues predominate over residues 330 to 346 (PPDEHQPPHITAEHMDQ). Residues 448–461 (DDPLTPLYPLTDTP) show a composition bias toward low complexity. Low complexity predominate over residues 2379–2402 (TLTFRLPPTAPTPATAALETKTTP). Residues 2425–2437 (HARDTSPPAEKRA) show a composition bias toward basic and acidic residues.

The protein belongs to the herpesviridae large tegument protein family. As to quaternary structure, interacts with host CUL1 and CUL4A; these interactions inhibit the E3 ligase activity of cullins. Interacts with inner tegument protein. Interacts with capsid vertex specific component CVC2. Interacts with the major capsid protein/MCP.

The protein resides in the virion tegument. It localises to the host cytoplasm. Its subcellular location is the host nucleus. It catalyses the reaction Thiol-dependent hydrolysis of ester, thioester, amide, peptide and isopeptide bonds formed by the C-terminal Gly of ubiquitin (a 76-residue protein attached to proteins as an intracellular targeting signal).. Functionally, large tegument protein that plays multiple roles in the viral cycle. During viral entry, remains associated with the capsid while most of the tegument is detached and participates in the capsid transport toward the host nucleus. Plays a role in the routing of the capsid at the nuclear pore complex and subsequent uncoating. Within the host nucleus, acts as a deneddylase and promotes the degradation of nuclear CRLs (cullin-RING ubiquitin ligases) and thereby stabilizes nuclear CRL substrates, while cytoplasmic CRLs remain unaffected. These modifications prevent host cell cycle S-phase progression and create a favorable environment allowing efficient viral genome replication. Participates later in the secondary envelopment of capsids. Indeed, plays a linker role for the association of the outer viral tegument to the capsids together with the inner tegument protein. The polypeptide is Large tegument protein deneddylase (Homo sapiens (Human)).